The sequence spans 278 residues: UPF0276 protein Sama_1305 (278 aa).

It belongs to the UPF0276 family.

The chain is UPF0276 protein Sama_1305 from Shewanella amazonensis (strain ATCC BAA-1098 / SB2B).